Reading from the N-terminus, the 232-residue chain is 5'-methylthioadenosine/S-adenosylhomocysteine nucleosidase (232 aa).

Glutamate 12 serves as the catalytic Proton acceptor. Substrate contacts are provided by residues glycine 78, isoleucine 152, and methionine 173–glutamate 174. Aspartate 197 (proton donor) is an active-site residue.

This sequence belongs to the PNP/UDP phosphorylase family. MtnN subfamily. Homodimer.

It carries out the reaction S-adenosyl-L-homocysteine + H2O = S-(5-deoxy-D-ribos-5-yl)-L-homocysteine + adenine. The enzyme catalyses S-methyl-5'-thioadenosine + H2O = 5-(methylsulfanyl)-D-ribose + adenine. The catalysed reaction is 5'-deoxyadenosine + H2O = 5-deoxy-D-ribose + adenine. The protein operates within amino-acid biosynthesis; L-methionine biosynthesis via salvage pathway; S-methyl-5-thio-alpha-D-ribose 1-phosphate from S-methyl-5'-thioadenosine (hydrolase route): step 1/2. Catalyzes the irreversible cleavage of the glycosidic bond in both 5'-methylthioadenosine (MTA) and S-adenosylhomocysteine (SAH/AdoHcy) to adenine and the corresponding thioribose, 5'-methylthioribose and S-ribosylhomocysteine, respectively. Also cleaves 5'-deoxyadenosine, a toxic by-product of radical S-adenosylmethionine (SAM) enzymes, into 5-deoxyribose and adenine. Thus, is required for in vivo function of the radical SAM enzymes biotin synthase and lipoic acid synthase, that are inhibited by 5'-deoxyadenosine accumulation. This chain is 5'-methylthioadenosine/S-adenosylhomocysteine nucleosidase, found in Enterobacter sp. (strain 638).